The sequence spans 141 residues: Large ribosomal subunit protein uL11 (141 aa).

Belongs to the universal ribosomal protein uL11 family. As to quaternary structure, part of the ribosomal stalk of the 50S ribosomal subunit. Interacts with L10 and the large rRNA to form the base of the stalk. L10 forms an elongated spine to which L12 dimers bind in a sequential fashion forming a multimeric L10(L12)X complex. In terms of processing, one or more lysine residues are methylated.

Its function is as follows. Forms part of the ribosomal stalk which helps the ribosome interact with GTP-bound translation factors. This is Large ribosomal subunit protein uL11 from Synechococcus sp. (strain CC9605).